The chain runs to 469 residues: UTP--glucose-1-phosphate uridylyltransferase 2 (469 aa).

The residue at position 2 (Ala-2) is an N-acetylalanine. Residues 85 to 88, Lys-99, Gln-162, and Gly-191 each bind UTP; that span reads LNGG. Substrate is bound at residue 87–88; it reads GG. Substrate is bound by residues His-192 and 220–222; that span reads NSD. 2 residues coordinate UTP: Asp-222 and Lys-360.

This sequence belongs to the UDPGP type 1 family. In terms of tissue distribution, expressed in cauline leaves, flowers and siliques.

It localises to the cytoplasm. The catalysed reaction is alpha-D-glucose 1-phosphate + UTP + H(+) = UDP-alpha-D-glucose + diphosphate. In terms of biological role, converts glucose 1-phosphate to UDP-glucose, which is the major glycosyl donor for polysaccharides. Acts redundantly with UGP1 and is essential for the synthesis of sucrose, starch and cell wall, and callose deposition. The sequence is that of UTP--glucose-1-phosphate uridylyltransferase 2 from Arabidopsis thaliana (Mouse-ear cress).